Here is a 371-residue protein sequence, read N- to C-terminus: tRNA-specific 2-thiouridylase MnmA (371 aa).

ATP-binding positions include 7–14 and Leu33; that span reads AMSGGVDS. Cys101 serves as the catalytic Nucleophile. Cysteines 101 and 213 form a disulfide. Gly125 is a binding site for ATP. Residues 163 to 165 form an interaction with tRNA region; it reads KDQ. Cys213 (cysteine persulfide intermediate) is an active-site residue.

It belongs to the MnmA/TRMU family.

The protein resides in the cytoplasm. It catalyses the reaction S-sulfanyl-L-cysteinyl-[protein] + uridine(34) in tRNA + AH2 + ATP = 2-thiouridine(34) in tRNA + L-cysteinyl-[protein] + A + AMP + diphosphate + H(+). Functionally, catalyzes the 2-thiolation of uridine at the wobble position (U34) of tRNA, leading to the formation of s(2)U34. In Roseiflexus castenholzii (strain DSM 13941 / HLO8), this protein is tRNA-specific 2-thiouridylase MnmA.